Here is a 212-residue protein sequence, read N- to C-terminus: Claudin-7-A (212 aa).

Over 1 to 7 (MANSGVQ) the chain is Cytoplasmic. Residues 8–28 (LLGFGLSLIGIIGLIVGTILP) form a helical membrane-spanning segment. The Extracellular portion of the chain corresponds to 29-81 (QWKMSAYVGDSIITAVATYQGLWMSCAFQSTGQLQCKIYDSILQLDSDLQATR). A helical transmembrane segment spans residues 82-102 (ALMIVGIIVSIAGLGVASIGM). Residues 103 to 119 (KCTTCGADDKVRKTRTA) lie on the Cytoplasmic side of the membrane. The chain crosses the membrane as a helical span at residues 120-140 (MTGGIILLVGALCAVVACSWF). The Extracellular segment spans residues 141-162 (AHNVIRAFYNPFTPVNTKFEFG). The helical transmembrane segment at 163 to 183 (AAIFIAWGGSFLDVLGGAMLA) threads the bilayer. Residues 184–212 (ASCPRSKQVSKYPKSNSTRSANGSNKEYV) are Cytoplasmic-facing. Positions 191 to 212 (QVSKYPKSNSTRSANGSNKEYV) are disordered.

This sequence belongs to the claudin family.

The protein resides in the cell junction. The protein localises to the tight junction. Its subcellular location is the cell membrane. Its function is as follows. Plays a major role in tight junction-specific obliteration of the intercellular space. The protein is Claudin-7-A of Danio rerio (Zebrafish).